Reading from the N-terminus, the 64-residue chain is Large ribosomal subunit protein bL35 (64 aa).

This sequence belongs to the bacterial ribosomal protein bL35 family.

The protein is Large ribosomal subunit protein bL35 of Wolinella succinogenes (strain ATCC 29543 / DSM 1740 / CCUG 13145 / JCM 31913 / LMG 7466 / NCTC 11488 / FDC 602W) (Vibrio succinogenes).